Consider the following 259-residue polypeptide: Bisphosphoglycerate mutase (259 aa).

The residue at position 2 (Ser2) is an N-acetylserine. N-linked (Glc) (glycation) lysine; in vitro glycosylation is found at Lys3 and Lys5. Arg10 to Asn17 serves as a coordination point for substrate. The active-site Tele-phosphohistidine intermediate is His11. Lys18 is a glycosylation site (N-linked (Glc) (glycation) lysine; in vitro). Cys23–Ser24 contributes to the substrate binding site. The N-linked (Glc) (glycation) lysine; in vitro glycan is linked to Lys43. Substrate is bound by residues Arg62, Glu89 to Tyr92, Arg100, and Arg116 to Arg117. Glu89 serves as the catalytic Proton donor/acceptor. Thr122 carries the phosphothreonine modification. A glycan (N-linked (Glc) (glycation) lysine) is linked at Lys159. Gly189–Asn190 serves as a coordination point for substrate. An N-linked (Glc) (glycation) lysine; in vitro glycan is attached at Lys197.

It belongs to the phosphoglycerate mutase family. BPG-dependent PGAM subfamily. In terms of assembly, homodimer. In terms of processing, glycation of Lys-159 in diabetic patients inactivates the enzyme. In terms of tissue distribution, expressed in red blood cells. Expressed in non-erythroid cells of the placenta; present in the syncytiotrophoblast layer of the placental villi at the feto-maternal interface (at protein level).

It carries out the reaction (2R)-3-phospho-glyceroyl phosphate = (2R)-2,3-bisphosphoglycerate + H(+). The enzyme catalyses (2R)-2-phosphoglycerate = (2R)-3-phosphoglycerate. Its activity is regulated as follows. At alkaline pH BPGM favors the synthase reaction; however, at lower pH the phosphatase reaction is dominant. Inhibited by citrate. Functionally, plays a major role in regulating hemoglobin oxygen affinity by controlling the levels of its allosteric effector 2,3-bisphosphoglycerate (2,3-BPG). Also exhibits mutase (EC 5.4.2.11) activity. This chain is Bisphosphoglycerate mutase (BPGM), found in Homo sapiens (Human).